We begin with the raw amino-acid sequence, 493 residues long: Ubiquitin carboxyl-terminal hydrolase 14 (493 aa).

Residues 4-80 form the Ubiquitin-like domain; the sequence is YSVTVKWGKE…MMGSADALPE (77 aa). Phosphothreonine is present on Thr52. Positions 105-483 constitute a USP domain; that stretch reads CGLTNLGNTC…IAYVLLYGPR (379 aa). Cys114 serves as the catalytic Nucleophile. Phosphoserine occurs at positions 143 and 148. Position 235 is a phosphothreonine (Thr235). A phosphoserine mark is found at Ser237, Ser302, and Ser432. His435 functions as the Proton acceptor in the catalytic mechanism. Lys449 carries the N6-acetyllysine modification.

This sequence belongs to the peptidase C19 family. USP14/UBP6 subfamily. In terms of assembly, homodimer (Potential). Associates with the 26S proteasome. Interacts with FANCC, CXCR4 and ERN1. Interacts with TRIM14; this interaction recruits USP14 to cleave ubiquitin chains of CGAS and KDM4D.

The protein localises to the cytoplasm. It is found in the cell membrane. The enzyme catalyses Thiol-dependent hydrolysis of ester, thioester, amide, peptide and isopeptide bonds formed by the C-terminal Gly of ubiquitin (a 76-residue protein attached to proteins as an intracellular targeting signal).. In terms of biological role, proteasome-associated deubiquitinase which releases ubiquitin from the proteasome targeted ubiquitinated proteins. Ensures the regeneration of ubiquitin at the proteasome. Is a reversibly associated subunit of the proteasome and a large fraction of proteasome-free protein exists within the cell. Required for the degradation of the chemokine receptor CXCR4 which is critical for CXCL12-induced cell chemotaxis. Also serves as a physiological inhibitor of endoplasmic reticulum-associated degradation (ERAD) under the non-stressed condition by inhibiting the degradation of unfolded endoplasmic reticulum proteins via interaction with ERN1. Indispensable for synaptic development and function at neuromuscular junctions (NMJs). Plays a role in the innate immune defense against viruses by stabilizing the viral DNA sensor CGAS and thus inhibiting its autophagic degradation. Inhibits OPTN-mediated selective autophagic degradation of KDM4D and thereby negatively regulates H3K9me2 and H3K9me3. In Pan troglodytes (Chimpanzee), this protein is Ubiquitin carboxyl-terminal hydrolase 14 (USP14).